Here is a 238-residue protein sequence, read N- to C-terminus: Aerobic respiration control protein ArcA (238 aa).

Residues 5–118 (HILIVEDELV…ELTIRARNLL (114 aa)) form the Response regulatory domain. A 4-aspartylphosphate modification is found at D54. The ompR/PhoB-type DNA-binding region spans 134 to 234 (VESYKFNGWE…IHGEGYRFCG (101 aa)).

Phosphorylated by ArcB.

The protein resides in the cytoplasm. Member of the two-component regulatory system ArcB/ArcA. Represses a wide variety of aerobic enzymes under anaerobic conditions. It may also be involved in the osmoregulation of envelope proteins. When activated by ArcB, it negatively regulates the expression of genes of aerobic function. Activates the transcription of the plfB operon by binding to its promoter. The polypeptide is Aerobic respiration control protein ArcA (arcA) (Escherichia coli O157:H7).